The chain runs to 336 residues: Ribosomal RNA large subunit methyltransferase F (336 aa).

The interval 1 to 24 (MPRPTSPHPDAERKSASPLHPRNR) is disordered.

This sequence belongs to the methyltransferase superfamily. METTL16/RlmF family.

It localises to the cytoplasm. It catalyses the reaction adenosine(1618) in 23S rRNA + S-adenosyl-L-methionine = N(6)-methyladenosine(1618) in 23S rRNA + S-adenosyl-L-homocysteine + H(+). Its function is as follows. Specifically methylates the adenine in position 1618 of 23S rRNA. The polypeptide is Ribosomal RNA large subunit methyltransferase F (Pseudomonas aeruginosa (strain LESB58)).